Reading from the N-terminus, the 957-residue chain is SH3 domain-binding protein 4-A (957 aa).

The SH3 1 domain occupies 54–113 (ENVKEVVAIKDYCPNNFTTLKFSKGEHLYVLDASGGDWWYAHNSTEMGYIPSSYVQPLNY). In terms of domain architecture, ZU5 spans 312 to 449 (TSIVCRLDSS…LEPVMYVVMV (138 aa)). Positions 649–719 (TSLKYGKLLK…HAKNVLVVGK (71 aa)) constitute an SH3 2 domain.

As to quaternary structure, homodimer or homooligomer.

Its subcellular location is the membrane. The protein localises to the clathrin-coated pit. It is found in the cytoplasmic vesicle. It localises to the clathrin-coated vesicle. The protein resides in the nucleus. Functionally, possible role in regulating endocytosis of the transferrin receptor at the plasma membrane. Alternatively, may function as a negative regulator of the amino acid-induced TOR signaling by inhibiting the formation of active Rag GTPase complexes. Preferentially binds inactive Rag GTPase complexes and prevents their interaction with the mTORC1 complex inhibiting its relocalization to lysosomes and its activation. Thereby, may indirectly regulate cell growth, proliferation and autophagy. This Xenopus laevis (African clawed frog) protein is SH3 domain-binding protein 4-A (sh3bp4-a).